The sequence spans 451 residues: L,D-transpeptidase 5 (451 aa).

One can recognise a L,D-TPase catalytic domain in the interval 263 to 384 (QVVKAEVSSH…AVYGDPVEVT (122 aa)). Substrate is bound by residues Y323 and 337–338 (NG). The Proton donor/acceptor role is filled by H342. The active-site Nucleophile is the C360. Residue N362 participates in substrate binding. Positions 417-451 (AAKPAATQIPVTAPVTPSDAPTPSGTPTTTNGPGG) are disordered. Residues 437-451 (PTPSGTPTTTNGPGG) are compositionally biased toward low complexity.

The protein operates within cell wall biogenesis; peptidoglycan biosynthesis. With respect to regulation, in contrast to other LDT paralogs, LdtMt5 is not inactivated by the beta-lactam carbapenems; beta-lactam carbapenems form covalent adducts with other LDT paralogs but the formation of covalent adducts was not detected for LdtMt5. Generates 3-&gt;3 cross-links in peptidoglycan, catalyzing the cleavage of the mDap(3)-D-Ala(4) bond of a tetrapeptide donor stem and the formation of a bond between the carbonyl of mDap(3) of the donor stem and the side chain of mDap(3) of the acceptor stem. Is specific for donor substrates containing a stem tetrapeptide since it cannot use pentapeptide stems. In Mycobacterium tuberculosis (strain ATCC 25618 / H37Rv), this protein is L,D-transpeptidase 5 (lprQ).